Here is a 582-residue protein sequence, read N- to C-terminus: Mitogen-activated protein kinase 17 (582 aa).

The disordered stretch occupies residues 22–61; sequence SSSFHLTTTGDDTVKDLHDPRREDAEGDGWEEVHEGPESD. Residues 33 to 45 are compositionally biased toward basic and acidic residues; the sequence is DTVKDLHDPRRED. In terms of domain architecture, Protein kinase spans 105 to 396; that stretch reads YKVSEVIGKG…AEEALTDPYF (292 aa). ATP contacts are provided by residues 111–119 and lysine 134; that span reads IGKGSYGVV. Catalysis depends on aspartate 231, which acts as the Proton acceptor. Phosphothreonine is present on threonine 267. The TXY motif lies at 267 to 269; it reads TDY. Tyrosine 269 carries the phosphotyrosine modification. Disordered regions lie at residues 474 to 502 and 542 to 582; these read EGVSKGEKSSPQLRQNASLPRERAIGNKH and ISAS…QLKT. Positions 482–491 are enriched in polar residues; it reads SSPQLRQNAS. Over residues 493–502 the composition is skewed to basic and acidic residues; it reads PRERAIGNKH. The segment covering 557-572 has biased composition (acidic residues); the sequence is DQEDSLTESMDETADE.

It belongs to the protein kinase superfamily. CMGC Ser/Thr protein kinase family. MAP kinase subfamily. Post-translationally, dually phosphorylated on Thr-267 and Tyr-269, which activates the enzyme.

It carries out the reaction L-seryl-[protein] + ATP = O-phospho-L-seryl-[protein] + ADP + H(+). It catalyses the reaction L-threonyl-[protein] + ATP = O-phospho-L-threonyl-[protein] + ADP + H(+). With respect to regulation, activated by threonine and tyrosine phosphorylation. The protein is Mitogen-activated protein kinase 17 (MPK17) of Oryza sativa subsp. japonica (Rice).